We begin with the raw amino-acid sequence, 80 residues long: Sulfur carrier protein TusA (80 aa).

Cys-17 acts as the Cysteine persulfide intermediate in catalysis.

This sequence belongs to the sulfur carrier protein TusA family.

The protein localises to the cytoplasm. In terms of biological role, sulfur carrier protein which probably makes part of a sulfur-relay system. The sequence is that of Sulfur carrier protein TusA from Pseudomonas putida (strain GB-1).